A 122-amino-acid chain; its full sequence is Large ribosomal subunit protein uL14 (122 aa).

The protein belongs to the universal ribosomal protein uL14 family. As to quaternary structure, part of the 50S ribosomal subunit. Forms a cluster with proteins L3 and L19. In the 70S ribosome, L14 and L19 interact and together make contacts with the 16S rRNA in bridges B5 and B8.

Binds to 23S rRNA. Forms part of two intersubunit bridges in the 70S ribosome. The chain is Large ribosomal subunit protein uL14 from Kocuria rhizophila (strain ATCC 9341 / DSM 348 / NBRC 103217 / DC2201).